We begin with the raw amino-acid sequence, 271 residues long: Glutamate racemase 3 (271 aa).

Substrate is bound by residues 15–16 and 47–48; these read DS and YG. C78 serves as the catalytic Proton donor/acceptor. 79 to 80 lines the substrate pocket; sequence NT. The Proton donor/acceptor role is filled by C185. A substrate-binding site is contributed by 186 to 187; that stretch reads TH.

This sequence belongs to the aspartate/glutamate racemases family.

The enzyme catalyses L-glutamate = D-glutamate. It functions in the pathway cell wall biogenesis; peptidoglycan biosynthesis. Its function is as follows. Provides the (R)-glutamate required for cell wall biosynthesis. This Caldanaerobacter subterraneus subsp. tengcongensis (strain DSM 15242 / JCM 11007 / NBRC 100824 / MB4) (Thermoanaerobacter tengcongensis) protein is Glutamate racemase 3.